The primary structure comprises 434 residues: 3-phosphoshikimate 1-carboxyvinyltransferase (434 aa).

Residues Lys22, Ser23, and Arg27 each contribute to the 3-phosphoshikimate site. Position 22 (Lys22) interacts with phosphoenolpyruvate. 2 residues coordinate phosphoenolpyruvate: Gly93 and Arg121. The 3-phosphoshikimate site is built by Ser168, Ser169, Gln170, Ser199, Asp320, and Lys347. Gln170 contacts phosphoenolpyruvate. Asp320 serves as the catalytic Proton acceptor. 3 residues coordinate phosphoenolpyruvate: Arg351, Arg394, and Lys419.

Belongs to the EPSP synthase family. In terms of assembly, monomer.

The protein localises to the cytoplasm. The catalysed reaction is 3-phosphoshikimate + phosphoenolpyruvate = 5-O-(1-carboxyvinyl)-3-phosphoshikimate + phosphate. Its pathway is metabolic intermediate biosynthesis; chorismate biosynthesis; chorismate from D-erythrose 4-phosphate and phosphoenolpyruvate: step 6/7. Its function is as follows. Catalyzes the transfer of the enolpyruvyl moiety of phosphoenolpyruvate (PEP) to the 5-hydroxyl of shikimate-3-phosphate (S3P) to produce enolpyruvyl shikimate-3-phosphate and inorganic phosphate. The chain is 3-phosphoshikimate 1-carboxyvinyltransferase from Burkholderia vietnamiensis (strain G4 / LMG 22486) (Burkholderia cepacia (strain R1808)).